A 107-amino-acid polypeptide reads, in one-letter code: Nucleoid-associated protein MCA1327 (107 aa).

This sequence belongs to the YbaB/EbfC family. As to quaternary structure, homodimer.

Its subcellular location is the cytoplasm. It localises to the nucleoid. Binds to DNA and alters its conformation. May be involved in regulation of gene expression, nucleoid organization and DNA protection. This is Nucleoid-associated protein MCA1327 from Methylococcus capsulatus (strain ATCC 33009 / NCIMB 11132 / Bath).